The primary structure comprises 305 residues: Alpha-N-acetylgalactosaminide alpha-2,6-sialyltransferase 3 (305 aa).

The Cytoplasmic segment spans residues 1-8 (MACILKRK). A helical; Signal-anchor for type II membrane protein membrane pass occupies residues 9-28 (PVLVVSFIALCILLLAMRLV). Residues 29–305 (NDATFPLLLN…VFTHPNWTLS (277 aa)) are Lumenal-facing. An intrachain disulfide couples cysteine 80 to cysteine 229. N-linked (GlcNAc...) asparagine glycosylation is found at asparagine 239 and asparagine 301.

It belongs to the glycosyltransferase 29 family. In terms of tissue distribution, in adult tissues, high expression in brain, lung and heart and to a lesser extent in kidney, mammary gland, spleen, testis and thymus.

The protein localises to the golgi apparatus membrane. The enzyme catalyses an alpha-Neu5Ac-(2-&gt;3)-beta-D-Gal-(1-&gt;3)-D-GlcNAc derivative + CMP-N-acetyl-beta-neuraminate = an alpha-Neu5Ac-(2-&gt;3)-beta-D-Gal-(1-&gt;3)-[alpha-Neu5Ac-(2-&gt;6)]-D-GlcNAc derivative + CMP + H(+). The catalysed reaction is a ganglioside GM1b (d18:1(4E)) + CMP-N-acetyl-beta-neuraminate = a ganglioside GD1alpha (d18:1(4E)) + CMP + H(+). It carries out the reaction a globoside MSGG + CMP-N-acetyl-beta-neuraminate = a globoside DSGG + CMP + H(+). It catalyses the reaction 3-O-[alpha-Neu5Ac-(2-&gt;3)-beta-D-Gal-(1-&gt;3)-alpha-D-GalNAc]-L-Ser-[protein] + CMP-N-acetyl-beta-neuraminate = a 3-O-{alpha-Neu5Ac-(2-&gt;3)-beta-D-Gal-(1-&gt;3)-[alpha-Neu5Ac-(2-&gt;6)]-alpha-D-GalNAc}-L-seryl-[protein] + CMP + H(+). The enzyme catalyses 3-O-[alpha-Neu5Ac-(2-&gt;3)-beta-D-Gal-(1-&gt;3)-alpha-D-GalNAc]-L-Thr-[protein] + CMP-N-acetyl-beta-neuraminate = a 3-O-{alpha-Neu5Ac-(2-&gt;3)-beta-D-Gal-(1-&gt;3)-[alpha-Neu5Ac-(2-&gt;6)]-alpha-D-GalNAc}-L-threonyl-[protein] + CMP + H(+). Its pathway is protein modification; protein glycosylation. The protein operates within glycolipid biosynthesis. Functionally, transfers the sialyl group (N-acetyl-alpha-neuraminyl or NeuAc) from CMP-NeuAc to the GalNAc residue on the NeuAc-alpha-2,3-Gal-beta-1,3-GalNAc sequence of glycoproteins and glycolipids forming an alpha-2,6-linkage. Produces branched type disialyl structures by transfer of a sialyl group onto a GalNAc residue inside the backbone core chains. ST6GalNAcIII prefers glycolipids to glycoproteins, predominantly catalyzing the biosynthesis of ganglioside GD1alpha from GM1b. GD1alpha is a critical molecule in the communication and interaction between neuronal cells and their supportive cells, particularly in brain tissues, and functions as an adhesion molecule in the process of metastasis. Sialylation of glycoproteins or glycosphingolipids is very important in tumor development, neuronal development, nerve repair, immunological processes and regulation of hormone sensitivity. In Mus musculus (Mouse), this protein is Alpha-N-acetylgalactosaminide alpha-2,6-sialyltransferase 3 (St6galnac3).